Reading from the N-terminus, the 405-residue chain is Diaminopimelate decarboxylase (405 aa).

An N6-(pyridoxal phosphate)lysine modification is found at Lys46. Pyridoxal 5'-phosphate is bound by residues Gly225 and 259–262 (EPGR). The substrate site is built by Arg262, Arg298, and Tyr302. The active-site Proton donor is Cys329. The substrate site is built by Glu330 and Tyr358. Residue Tyr358 participates in pyridoxal 5'-phosphate binding.

It belongs to the Orn/Lys/Arg decarboxylase class-II family. LysA subfamily. As to quaternary structure, homodimer. Pyridoxal 5'-phosphate is required as a cofactor.

The enzyme catalyses meso-2,6-diaminopimelate + H(+) = L-lysine + CO2. It participates in amino-acid biosynthesis; L-lysine biosynthesis via DAP pathway; L-lysine from DL-2,6-diaminopimelate: step 1/1. Specifically catalyzes the decarboxylation of meso-diaminopimelate (meso-DAP) to L-lysine. In Helicobacter pylori (strain ATCC 700392 / 26695) (Campylobacter pylori), this protein is Diaminopimelate decarboxylase.